The chain runs to 20 residues: Dentinal fluid transport-stimulating peptide (20 aa).

Positions 1–20 are disordered; it reads GVIAWELQHNEPGRKDSTAG. Residues 8–20 are compositionally biased toward basic and acidic residues; the sequence is QHNEPGRKDSTAG.

In terms of biological role, this peptide stimulates the transport of dentinal fluid, which is important for the prevention of dental caries. This is Dentinal fluid transport-stimulating peptide from Rattus norvegicus (Rat).